The primary structure comprises 636 residues: C-terminal binding protein AN (636 aa).

A disordered region spans residues 1-21 (MSKIRSSATMPHRDQPSPASP). NAD(+) is bound by residues S91, 147-148 (WL), 169-174 (VGRSVS), D193, 231-237 (CALTNDT), 258-260 (TGS), D284, and 307-311 (RSADY). The interval 341–489 (VSDEEVEESE…PLEVMQESSP (149 aa)) is disordered. Residues 342–357 (SDEEVEESEASEEEEQ) are compositionally biased toward acidic residues. A compositionally biased stretch (polar residues) spans 369 to 384 (ESTSRQQGESTLTSTE). A compositionally biased stretch (basic and acidic residues) spans 385–395 (IVRREASELKE). A compositionally biased stretch (polar residues) spans 398-409 (SPGQQHVSQNTA). Over residues 417–429 (SRSGKKAKKRHSQ) the composition is skewed to basic residues. Residues 430–445 (QKYMQKTDGSSGLNEE) show a composition bias toward polar residues. The segment covering 470 to 480 (SPEDSRSRKTP) has biased composition (basic and acidic residues).

Belongs to the D-isomer specific 2-hydroxyacid dehydrogenase family. Plant AN subfamily. As to quaternary structure, homodimer. Interacts with KCBP and SUB (via intra-cellular domain); AN is not required for the correct subcellular localization and recycling of SUB. Binds to SOKs proteins polymers (e.g. SOK1, SOK2, SOK3 and SOK4). Interacts with IPGA1 on microtubule upon mechanical stress to regulate microtubule organization. It depends on NAD(+) as a cofactor. As to expression, expressed in cotyledons, leaves, roots, stems and floral buds.

It is found in the cytoplasm. It localises to the golgi apparatus. Its subcellular location is the trans-Golgi network. The protein resides in the cytoskeleton. In terms of biological role, involved in controlling the equilibrium between tubular and stacked structures in the Golgi complex. Required for cortical microtubules (MTs) arrangement that confers cell shape. Cooperatively with IPGA1, negatively regulates cortical microtubules (CMTs) organization in response to mechanical stress and modulates pavement cells morphogenesis leading to puzzle shape, probably in an AAA1/KTN1-dependent manner. Regulates the width of leaves by controlling the polar elongation of leaf cells. Involved in the regulation of trichome branching. Seems to not be able to regulate gene transcription. Regulates epidermal cell divisions and elongation in a non-cell-autonomous manner (regulated by subepidermal cells), but regulates epidermal cell polarity, shape, trichome branching and elongation in a cell-autonomous manner. Negatively regulates growth in the petiole elongation. Prevents lipid peroxidation as a result of abiotic stress response. Is involved in the SUB-dependent signaling mechanism and may act in a membrane trafficking event around the trans-Golgi network. The polypeptide is C-terminal binding protein AN (Arabidopsis thaliana (Mouse-ear cress)).